We begin with the raw amino-acid sequence, 301 residues long: Probable alpha-L-glutamate ligase (301 aa).

The ATP-grasp domain maps to leucine 104 to glutamate 287. Residues lysine 141, glutamate 178–phenylalanine 179, aspartate 187, and arginine 211–asparagine 213 each bind ATP. 3 residues coordinate Mg(2+): aspartate 248, glutamate 260, and asparagine 262. Residues aspartate 248, glutamate 260, and asparagine 262 each coordinate Mn(2+).

The protein belongs to the RimK family. Mg(2+) is required as a cofactor. Requires Mn(2+) as cofactor.

This is Probable alpha-L-glutamate ligase from Nitrosococcus oceani (strain ATCC 19707 / BCRC 17464 / JCM 30415 / NCIMB 11848 / C-107).